The sequence spans 371 residues: MSIDDKVRAIVKEFKAYVPGKSKEEIARNYGIDPEKIIKLGSNENPWGCSPKIAEKLMDEVSKLHQYPQPINPELMEEISKFTKMPVENIIVGGDGADEVIDNIMRILIDEDDEVIIPIPTFTQYAISAKIHGANIKWAKFDEENGFKLDAESVLNNITEKTKAIFLCTPNNPTGNVIPTEDIKKIVESTDALVMIDHAYIEYSKEEYDLTNWALKYDNVLVLRTFSKVFGLAGQRVGYGVTSKKLVDYMMRIKPIFSLTRASQVSAITALQDKEFFKKCLKEGIESREEIYNGLKKFKQLEVYPTEANYMLVKVKNGMNSSEFCEALLKKGVIVRDCYSFEGLEPYYFRVSIGTFEENERFLKIMSEIVE.

N6-(pyridoxal phosphate)lysine is present on Lys-228.

The protein belongs to the class-II pyridoxal-phosphate-dependent aminotransferase family. Histidinol-phosphate aminotransferase subfamily. Pyridoxal 5'-phosphate serves as cofactor.

It carries out the reaction L-histidinol phosphate + 2-oxoglutarate = 3-(imidazol-4-yl)-2-oxopropyl phosphate + L-glutamate. It participates in amino-acid biosynthesis; L-histidine biosynthesis; L-histidine from 5-phospho-alpha-D-ribose 1-diphosphate: step 7/9. The protein is Histidinol-phosphate aminotransferase of Methanococcus maripaludis (strain C6 / ATCC BAA-1332).